We begin with the raw amino-acid sequence, 364 residues long: MMSKNYHIAVLPGDGIGPEVMTQALKVLDAVRNRFAMRITTSHYDVGGAAIDNHGQPLPPATVEGCEQADAVLFGSVGGPKWEHLPPDQQPERGALLPLRKHFKLFSNLRPAKLYQGLEAFCPLRADIAANGFDILCVRELTGGIYFGQPKGREGSGQYEKAFDTEVYHRFEIERIARIAFESARKRRHKVTSIDKANVLQSSILWREIVNEIATEYPDVELAHMYIDNATMQLIKDPSQFDVLLCSNLFGDILSDECAMITGSMGMLPSASLNEQGFGLYEPAGGSAPDIAGKNIANPIAQILSLALLLRYSLDADDAASAIERAINRALEEGIRTGDLARGAAAVSTDEMGDIIARYVAEGV.

79–92 (GPKWEHLPPDQQPE) provides a ligand contact to NAD(+). Residues R100, R110, R139, and D228 each coordinate substrate. Residues D228, D252, and D256 each contribute to the Mg(2+) site. 286 to 298 (GSAPDIAGKNIAN) serves as a coordination point for NAD(+).

This sequence belongs to the isocitrate and isopropylmalate dehydrogenases family. LeuB type 1 subfamily. As to quaternary structure, homodimer. Mg(2+) serves as cofactor. Mn(2+) is required as a cofactor.

Its subcellular location is the cytoplasm. It catalyses the reaction (2R,3S)-3-isopropylmalate + NAD(+) = 4-methyl-2-oxopentanoate + CO2 + NADH. Its pathway is amino-acid biosynthesis; L-leucine biosynthesis; L-leucine from 3-methyl-2-oxobutanoate: step 3/4. Functionally, catalyzes the oxidation of 3-carboxy-2-hydroxy-4-methylpentanoate (3-isopropylmalate) to 3-carboxy-4-methyl-2-oxopentanoate. The product decarboxylates to 4-methyl-2 oxopentanoate. This is 3-isopropylmalate dehydrogenase from Escherichia coli (strain UTI89 / UPEC).